The following is a 581-amino-acid chain: Proline--tRNA ligase (581 aa).

This sequence belongs to the class-II aminoacyl-tRNA synthetase family. ProS type 1 subfamily. In terms of assembly, homodimer.

It is found in the cytoplasm. It catalyses the reaction tRNA(Pro) + L-proline + ATP = L-prolyl-tRNA(Pro) + AMP + diphosphate. In terms of biological role, catalyzes the attachment of proline to tRNA(Pro) in a two-step reaction: proline is first activated by ATP to form Pro-AMP and then transferred to the acceptor end of tRNA(Pro). As ProRS can inadvertently accommodate and process non-cognate amino acids such as alanine and cysteine, to avoid such errors it has two additional distinct editing activities against alanine. One activity is designated as 'pretransfer' editing and involves the tRNA(Pro)-independent hydrolysis of activated Ala-AMP. The other activity is designated 'posttransfer' editing and involves deacylation of mischarged Ala-tRNA(Pro). The misacylated Cys-tRNA(Pro) is not edited by ProRS. The protein is Proline--tRNA ligase of Methylibium petroleiphilum (strain ATCC BAA-1232 / LMG 22953 / PM1).